A 391-amino-acid polypeptide reads, in one-letter code: Acridone synthase 2 (391 aa).

The active site involves Cys-164.

The protein belongs to the thiolase-like superfamily. Chalcone/stilbene synthases family. Homodimer.

The enzyme catalyses N-methylanthraniloyl-CoA + 3 malonyl-CoA + 3 H(+) = 1,3-dihydroxy-N-methylacridone + 3 CO2 + 4 CoA + H2O. This chain is Acridone synthase 2 (ACS2), found in Ruta graveolens (Common rue).